Reading from the N-terminus, the 249-residue chain is uncharacterized protein (249 aa).

It belongs to the ycf73 family.

The protein localises to the plastid. It localises to the chloroplast. This is an uncharacterized protein from Oryza sativa (Rice).